The following is a 424-amino-acid chain: tRNA(Met) cytidine acetate ligase (424 aa).

ATP contacts are provided by residues 7-20 (ITEYNPFHNGHLHH), Gly-102, Asn-174, and Arg-199.

It belongs to the TmcAL family.

The protein resides in the cytoplasm. It carries out the reaction cytidine(34) in elongator tRNA(Met) + acetate + ATP = N(4)-acetylcytidine(34) in elongator tRNA(Met) + AMP + diphosphate. Functionally, catalyzes the formation of N(4)-acetylcytidine (ac(4)C) at the wobble position of elongator tRNA(Met), using acetate and ATP as substrates. First activates an acetate ion to form acetyladenylate (Ac-AMP) and then transfers the acetyl group to tRNA to form ac(4)C34. This Alkaliphilus metalliredigens (strain QYMF) protein is tRNA(Met) cytidine acetate ligase.